Consider the following 463-residue polypeptide: L-seryl-tRNA(Sec) selenium transferase (463 aa).

Lys295 carries the N6-(pyridoxal phosphate)lysine modification.

This sequence belongs to the SelA family. As to quaternary structure, homodecamer; pentamer of dimers. Binds only one seryl-tRNA(Sec) per dimer. It depends on pyridoxal 5'-phosphate as a cofactor.

Its subcellular location is the cytoplasm. The enzyme catalyses L-seryl-tRNA(Sec) + selenophosphate + H(+) = L-selenocysteinyl-tRNA(Sec) + phosphate. The protein operates within aminoacyl-tRNA biosynthesis; selenocysteinyl-tRNA(Sec) biosynthesis; selenocysteinyl-tRNA(Sec) from L-seryl-tRNA(Sec) (bacterial route): step 1/1. In terms of biological role, converts seryl-tRNA(Sec) to selenocysteinyl-tRNA(Sec) required for selenoprotein biosynthesis. The protein is L-seryl-tRNA(Sec) selenium transferase of Escherichia coli O17:K52:H18 (strain UMN026 / ExPEC).